The chain runs to 744 residues: Cytoskeleton-associated protein 2-like (744 aa).

Disordered regions lie at residues 35–56 (YLKA…GPKK), 76–169 (LQSR…THVE), 182–216 (KENL…SSLA), 317–337 (TVTE…VLQG), and 428–452 (NKTA…GAQT). Polar residues-rich tracts occupy residues 76–86 (LQSRPANITRS), 102–129 (SESV…STDG), and 137–154 (GSLN…VTDQ). Lys195 participates in a covalent cross-link: Glycyl lysine isopeptide (Lys-Gly) (interchain with G-Cter in SUMO1); alternate. Residue Lys195 forms a Glycyl lysine isopeptide (Lys-Gly) (interchain with G-Cter in SUMO2); alternate linkage. A compositionally biased stretch (polar residues) spans 199–216 (ESWTINKPQTNQTKSSLA). At Ser744 the chain carries Phosphoserine.

This sequence belongs to the CKAP2 family. In terms of processing, ubiquitinated by the anaphase promoting complex/cyclosome (APC/C).

Its subcellular location is the cytoplasm. The protein resides in the cytoskeleton. It is found in the spindle pole. Microtubule-associated protein required for mitotic spindle formation and cell-cycle progression in neural progenitor cells. The polypeptide is Cytoskeleton-associated protein 2-like (CKAP2L) (Bos taurus (Bovine)).